Reading from the N-terminus, the 199-residue chain is Imidazoleglycerol-phosphate dehydratase (199 aa).

It belongs to the imidazoleglycerol-phosphate dehydratase family.

The protein localises to the cytoplasm. It catalyses the reaction D-erythro-1-(imidazol-4-yl)glycerol 3-phosphate = 3-(imidazol-4-yl)-2-oxopropyl phosphate + H2O. It participates in amino-acid biosynthesis; L-histidine biosynthesis; L-histidine from 5-phospho-alpha-D-ribose 1-diphosphate: step 6/9. This is Imidazoleglycerol-phosphate dehydratase from Rhodospirillum rubrum (strain ATCC 11170 / ATH 1.1.1 / DSM 467 / LMG 4362 / NCIMB 8255 / S1).